The following is a 129-amino-acid chain: Iron-sulfur cluster assembly 1 homolog, mitochondrial (129 aa).

Residues 1 to 12 constitute a mitochondrion transit peptide; the sequence is MSASLVRATVRA. Fe cation-binding residues include Cys57, Cys121, and Cys123.

It belongs to the HesB/IscA family. Interacts with CRY2, but not with CRY1 (in vitro).

The protein localises to the mitochondrion. In terms of biological role, involved in the maturation of mitochondrial 4Fe-4S proteins functioning late in the iron-sulfur cluster assembly pathway. Probably involved in the binding of an intermediate of Fe/S cluster assembly. In Rattus norvegicus (Rat), this protein is Iron-sulfur cluster assembly 1 homolog, mitochondrial (Isca1).